A 187-amino-acid chain; its full sequence is MRLVLLGPPGSGKGTQATRLKDTFEIPHISTGDLLRAEVAAGSPLGLKAKEVMARGDLVSDDILLGMLEARLGQADVAKGFILDGYPRNVAQANALCALLSKIGQPLDAVVQLDVASELLVERIAGRAKAEGREDDNPESVRKRLQVYTDSTAPVIGFYEQRGKLTRVDGVGSLDEVLERIRKALGR.

10–15 (GSGKGT) is an ATP binding site. The interval 30–59 (STGDLLRAEVAAGSPLGLKAKEVMARGDLV) is NMP. Residues Thr31, Arg36, 57-59 (DLV), 85-88 (GYPR), and Gln92 each bind AMP. Residues 126–136 (GRAKAEGREDD) form an LID region. Residue Arg127 participates in ATP binding. AMP contacts are provided by Arg133 and Arg144. ATP is bound at residue Gly172.

It belongs to the adenylate kinase family. As to quaternary structure, monomer.

The protein localises to the cytoplasm. The enzyme catalyses AMP + ATP = 2 ADP. The protein operates within purine metabolism; AMP biosynthesis via salvage pathway; AMP from ADP: step 1/1. Catalyzes the reversible transfer of the terminal phosphate group between ATP and AMP. Plays an important role in cellular energy homeostasis and in adenine nucleotide metabolism. The protein is Adenylate kinase of Xanthomonas oryzae pv. oryzae (strain MAFF 311018).